A 268-amino-acid chain; its full sequence is Phycocyanobilin lyase subunit alpha (268 aa).

Belongs to the CpcE/RpcE/PecE family. As to quaternary structure, cpcE and CpcF associate to form a lyase.

Its function is as follows. Required for the chromophorylation of the cpcA gene product. The polypeptide is Phycocyanobilin lyase subunit alpha (cpcE) (Picosynechococcus sp. (strain ATCC 27264 / PCC 7002 / PR-6) (Agmenellum quadruplicatum)).